The following is a 378-amino-acid chain: Tetraacyldisaccharide 4'-kinase (378 aa).

ATP is bound at residue 63–70; that stretch reads AVGGAGKT.

Belongs to the LpxK family.

It carries out the reaction a lipid A disaccharide + ATP = a lipid IVA + ADP + H(+). The protein operates within glycolipid biosynthesis; lipid IV(A) biosynthesis; lipid IV(A) from (3R)-3-hydroxytetradecanoyl-[acyl-carrier-protein] and UDP-N-acetyl-alpha-D-glucosamine: step 6/6. Transfers the gamma-phosphate of ATP to the 4'-position of a tetraacyldisaccharide 1-phosphate intermediate (termed DS-1-P) to form tetraacyldisaccharide 1,4'-bis-phosphate (lipid IVA). The polypeptide is Tetraacyldisaccharide 4'-kinase (Anaeromyxobacter sp. (strain K)).